Reading from the N-terminus, the 107-residue chain is UPF0145 protein YbjQ (107 aa).

It belongs to the UPF0145 family.

The polypeptide is UPF0145 protein YbjQ (Salmonella gallinarum (strain 287/91 / NCTC 13346)).